The chain runs to 374 residues: Cell division protein DivIB (374 aa).

The segment at 1–90 (MWKISNENDI…EEEHFADRLP (90 aa)) is disordered. Over 1–103 (MWKISNENDI…KTRNKRLYRR (103 aa)) the chain is Cytoplasmic. Residues 39-53 (YLKKQAEEAASKGEN) show a composition bias toward basic and acidic residues. Residues 56-75 (AEVTITLQEQSQEEPQQHLP) are compositionally biased toward polar residues. Residues 104–124 (LAFILTCLGTAILVALYFVSP) traverse the membrane as a helical segment. Over 125–374 (LSRLSEVTVS…GENQEVQQAE (250 aa)) the chain is Extracellular. The POTRA domain occupies 126 to 197 (SRLSEVTVSG…NSFKIDIQEY (72 aa)). The disordered stretch occupies residues 325–374 (KESEETGSEVSEDSAVENQEVVDPNAGVATDEANNGTPTNGENQEVQQAE). Over residues 326–339 (ESEETGSEVSEDSA) the composition is skewed to acidic residues. Over residues 356–374 (EANNGTPTNGENQEVQQAE) the composition is skewed to polar residues.

This sequence belongs to the FtsQ/DivIB family. DivIB subfamily.

The protein localises to the cell membrane. Functionally, cell division protein that may be involved in stabilizing or promoting the assembly of the division complex. The protein is Cell division protein DivIB of Enterococcus faecalis (strain ATCC 700802 / V583).